The sequence spans 211 residues: Metalloproteinase inhibitor 3 (211 aa).

An N-terminal signal peptide occupies residues 1–23 (MTPWLGLVVLLGSWSLGDWGAEA). Cys-24 is a binding site for Zn(2+). 2 involved in metalloproteinase-binding regions span residues 24-27 (CTCS) and 88-89 (ES). Intrachain disulfides connect Cys-24-Cys-91, Cys-26-Cys-118, Cys-36-Cys-143, Cys-145-Cys-192, Cys-150-Cys-155, and Cys-163-Cys-184. One can recognise an NTR domain in the interval 24 to 143 (CTCSPSHPQD…GLNYRYHLGC (120 aa)). Residues 105–188 (TGRVYDGKMY…SKHYACIRQK (84 aa)) form a mediates interaction with EFEMP1 region. The N-linked (GlcNAc...) asparagine glycan is linked to Asn-207.

This sequence belongs to the protease inhibitor I35 (TIMP) family. In terms of assembly, interacts with EFEMP1. Interacts with KDR.

It is found in the secreted. It localises to the extracellular space. The protein localises to the extracellular matrix. Mediates a variety of processes including matrix regulation and turnover, inflammation, and angiogenesis, through reversible inhibition of zinc protease superfamily enzymes, primarily matrix metalloproteinases (MMPs). Regulates extracellular matrix (ECM) remodeling through inhibition of matrix metalloproteinases (MMP) including MMP-1, MMP-2, MMP-3, MMP-7, MMP-9, MMP-13, MMP-14 and MMP-15. Additionally, modulates the processing of amyloid precursor protein (APP) and apolipoprotein E receptor ApoER2 by inhibiting two alpha-secretases ADAM10 and ADAM17. Functions as a tumor suppressor and a potent inhibitor of angiogenesis. Exerts its anti-angiogenic effect by directly interacting with vascular endothelial growth factor (VEGF) receptor-2/KDR, preventing its binding to the VEGFA ligand. Selectively induces apoptosis in angiogenic endothelial cells through a caspase-independent cell death pathway. Mechanistically, inhibits matrix-induced focal adhesion kinase PTK2 tyrosine phosphorylation and association with paxillin/PXN and disrupts the incorporation of ITGB3, PTK2 and PXN into focal adhesion contacts on the matrix. The chain is Metalloproteinase inhibitor 3 (TIMP3) from Equus caballus (Horse).